A 61-amino-acid chain; its full sequence is Large ribosomal subunit protein eL24 (61 aa).

Zn(2+) is bound by residues Cys7, Cys10, Cys33, and Cys37. Residues 7 to 37 (CTYCGRSIEPGTGLMYVKNDGSVLWFCSSKC) form a C4-type zinc finger.

It belongs to the eukaryotic ribosomal protein eL24 family. In terms of assembly, part of the 50S ribosomal subunit. Forms a cluster with proteins L3 and L14. It depends on Zn(2+) as a cofactor.

Its function is as follows. Binds to the 23S rRNA. This chain is Large ribosomal subunit protein eL24, found in Hyperthermus butylicus (strain DSM 5456 / JCM 9403 / PLM1-5).